Consider the following 400-residue polypeptide: NAD-dependent protein deacetylase sirtuin-7 (400 aa).

The tract at residues 1–28 is disordered; it reads MAAGGLSRSERKAAERVRRLREEQQRER. A compositionally biased stretch (basic and acidic residues) spans 8-28; sequence RSERKAAERVRRLREEQQRER. A Deacetylase sirtuin-type domain is found at 82-329; that stretch reads PEELQRKVRE…QLLMDELGLE (248 aa). NAD(+) is bound by residues 107–126 and 167–170; these read GAGI…NGVW and QNCD. The active-site Proton acceptor is the H187. C195, C198, C225, and C228 together coordinate Zn(2+). Residues 268-270, 297-299, and C315 each bind NAD(+); these read GSS and NLQ. The disordered stretch occupies residues 354-380; it reads SHSRKSLCRSREEPGPGDRGAPLSSAP. R388 is subject to Asymmetric dimethylarginine; alternate. At R388 the chain carries Omega-N-methylarginine; alternate.

Belongs to the sirtuin family. Class IV subfamily. Interacts with UBTF and the RNA polymerase I complex. Interacts with components of the B-WICH complex, such as MYBBP1A, SMARCA5/SNF2H and BAZ1B/WSTF. Interacts with ELK4, leading to stabilization at target promoters for H3K18Ac deacetylation. Interacts with histone H2A and/or histone H2B. Interacts with DNMT1. Interacts with SIRT1. Zn(2+) is required as a cofactor. Phosphorylated during mitosis. In terms of processing, methylation at Arg-388 by PRMT6 inhibits the H3K18Ac histone deacetylase activity, promoting mitochondria biogenesis and maintaining mitochondria respiration. Post-translationally, ubiquitinated via 'Lys-63'-linked ubiquitin chains. Deubiquitinated by USP7, inhibiting the H3K18Ac histone deacetylase activity and regulating gluconeogenesis. Ubiquitinated by E3 ubiquitin-protein ligase complex containing FBXO7; leading to proteasomal degradation.

The protein localises to the nucleus. The protein resides in the nucleolus. Its subcellular location is the nucleoplasm. It localises to the chromosome. It is found in the cytoplasm. It catalyses the reaction N(6)-acetyl-L-lysyl-[protein] + NAD(+) + H2O = 2''-O-acetyl-ADP-D-ribose + nicotinamide + L-lysyl-[protein]. It carries out the reaction N(6)-glutaryl-L-lysyl-[protein] + NAD(+) + H2O = 2''-O-glutaryl-ADP-D-ribose + nicotinamide + L-lysyl-[protein]. The catalysed reaction is N(6)-succinyl-L-lysyl-[protein] + NAD(+) + H2O = 2''-O-succinyl-ADP-D-ribose + nicotinamide + L-lysyl-[protein]. The enzyme catalyses N(6)-propanoyl-L-lysyl-[protein] + NAD(+) + H2O = 3''-O-propanoyl-ADP-D-ribose + nicotinamide + L-lysyl-[protein]. It catalyses the reaction N(6)-decanoyl-L-lysyl-[protein] + NAD(+) + H2O = 2''-O-decanoyl-ADP-D-ribose + nicotinamide + L-lysyl-[protein]. NAD-dependent protein-lysine deacetylase and deacylase activities are activated by nucleic acids. Histone deacetylase activity is activated by DNA. Protein-lysine deacylase activity is activated by RNA. H3K18Ac histone deacetylase activity is inhibited by methylation at Arg-388. H3K18Ac histone deacetylase activity is inhibited by deubiquitination by USP7. In terms of biological role, NAD-dependent protein-lysine deacylase that can act both as a deacetylase or deacylase (desuccinylase, depropionylase, deglutarylase and dedecanoylase), depending on the context. Specifically mediates deacetylation of histone H3 at 'Lys-18' (H3K18Ac). In contrast to other histone deacetylases, displays strong preference for a specific histone mark, H3K18Ac, directly linked to control of gene expression. H3K18Ac is mainly present around the transcription start site of genes and has been linked to activation of nuclear hormone receptors; SIRT7 thereby acts as a transcription repressor. Moreover, H3K18 hypoacetylation has been reported as a marker of malignancy in various cancers and seems to maintain the transformed phenotype of cancer cells. Also able to mediate deacetylation of histone H3 at 'Lys-36' (H3K36Ac) in the context of nucleosomes. Also mediates deacetylation of non-histone proteins, such as ATM, CDK9, DDX21, DDB1, FBL, FKBP5/FKBP51, GABPB1, RAN, RRP9/U3-55K and POLR1E/PAF53. Enriched in nucleolus where it stimulates transcription activity of the RNA polymerase I complex. Acts by mediating the deacetylation of the RNA polymerase I subunit POLR1E/PAF53, thereby promoting the association of RNA polymerase I with the rDNA promoter region and coding region. In response to metabolic stress, SIRT7 is released from nucleoli leading to hyperacetylation of POLR1E/PAF53 and decreased RNA polymerase I transcription. Required to restore the transcription of ribosomal RNA (rRNA) at the exit from mitosis. Promotes pre-ribosomal RNA (pre-rRNA) cleavage at the 5'-terminal processing site by mediating deacetylation of RRP9/U3-55K, a core subunit of the U3 snoRNP complex. Mediates 'Lys-37' deacetylation of Ran, thereby regulating the nuclear export of NF-kappa-B subunit RELA/p65. Acts as a regulator of DNA damage repair by mediating deacetylation of ATM during the late stages of DNA damage response, promoting ATM dephosphorylation and deactivation. Suppresses the activity of the DCX (DDB1-CUL4-X-box) E3 ubiquitin-protein ligase complexes by mediating deacetylation of DDB1, which prevents the interaction between DDB1 and CUL4 (CUL4A or CUL4B). Activates RNA polymerase II transcription by mediating deacetylation of CDK9, thereby promoting 'Ser-2' phosphorylation of the C-terminal domain (CTD) of RNA polymerase II. Deacetylates FBL, promoting histone-glutamine methyltransferase activity of FBL. Acts as a regulator of mitochondrial function by catalyzing deacetylation of GABPB1. Regulates Akt/AKT1 activity by mediating deacetylation of FKBP5/FKBP51. Required to prevent R-loop-associated DNA damage and transcription-associated genomic instability by mediating deacetylation and subsequent activation of DDX21, thereby overcoming R-loop-mediated stalling of RNA polymerases. In addition to protein deacetylase activity, also acts as a protein-lysine deacylase. Acts as a protein depropionylase by mediating depropionylation of Osterix (SP7), thereby regulating bone formation by osteoblasts. Acts as a histone deglutarylase by mediating deglutarylation of histone H4 on 'Lys-91' (H4K91glu); a mark that destabilizes nucleosomes by promoting dissociation of the H2A-H2B dimers from nucleosomes. Acts as a histone desuccinylase: in response to DNA damage, recruited to DNA double-strand breaks (DSBs) and catalyzes desuccinylation of histone H3 on 'Lys-122' (H3K122succ), thereby promoting chromatin condensation and DSB repair. Also promotes DSB repair by promoting H3K18Ac deacetylation, regulating non-homologous end joining (NHEJ). Along with its role in DNA repair, required for chromosome synapsis during prophase I of female meiosis by catalyzing H3K18Ac deacetylation. Involved in transcriptional repression of LINE-1 retrotransposon via H3K18Ac deacetylation, and promotes their association with the nuclear lamina. Required to stabilize ribosomal DNA (rDNA) heterochromatin and prevent cellular senescence induced by rDNA instability. Acts as a negative regulator of SIRT1 by preventing autodeacetylation of SIRT1, restricting SIRT1 deacetylase activity. The polypeptide is NAD-dependent protein deacetylase sirtuin-7 (SIRT7) (Bos taurus (Bovine)).